Consider the following 115-residue polypeptide: Tyrosine-protein phosphatase 18 (115 aa).

The Tyrosine-protein phosphatase domain occupies 1 to 115; the sequence is WLMIVEQKCR…ETGSDAPMVV (115 aa). Position 83 (Asp-83) interacts with substrate.

This sequence belongs to the protein-tyrosine phosphatase family.

The enzyme catalyses O-phospho-L-tyrosyl-[protein] + H2O = L-tyrosyl-[protein] + phosphate. The chain is Tyrosine-protein phosphatase 18 (STY-18) from Styela plicata (Wrinkled sea squirt).